The primary structure comprises 205 residues: Dephospho-CoA kinase (205 aa).

Positions 6–205 constitute a DPCK domain; it reads RIGLTGGIAA…EIYAGWCAGR (200 aa). 14–19 provides a ligand contact to ATP; sequence AAGKST.

Belongs to the CoaE family.

It is found in the cytoplasm. It carries out the reaction 3'-dephospho-CoA + ATP = ADP + CoA + H(+). It functions in the pathway cofactor biosynthesis; coenzyme A biosynthesis; CoA from (R)-pantothenate: step 5/5. Its function is as follows. Catalyzes the phosphorylation of the 3'-hydroxyl group of dephosphocoenzyme A to form coenzyme A. The polypeptide is Dephospho-CoA kinase (Bifidobacterium longum (strain NCC 2705)).